A 315-amino-acid polypeptide reads, in one-letter code: Ribosomal RNA small subunit methyltransferase H (315 aa).

S-adenosyl-L-methionine contacts are provided by residues 33 to 35, aspartate 52, phenylalanine 84, aspartate 106, and glutamine 113; that span reads GGH.

Belongs to the methyltransferase superfamily. RsmH family.

It is found in the cytoplasm. The catalysed reaction is cytidine(1402) in 16S rRNA + S-adenosyl-L-methionine = N(4)-methylcytidine(1402) in 16S rRNA + S-adenosyl-L-homocysteine + H(+). Its function is as follows. Specifically methylates the N4 position of cytidine in position 1402 (C1402) of 16S rRNA. The protein is Ribosomal RNA small subunit methyltransferase H of Lactobacillus acidophilus (strain ATCC 700396 / NCK56 / N2 / NCFM).